Consider the following 90-residue polypeptide: U7-theraphotoxin-Hhn1a 7 (90 aa).

An N-terminal signal peptide occupies residues 1–19 (MKTAIFTVVLALAVFAVLS). A propeptide spanning residues 20–50 (FGWEANEKALSEGFTELIHEKEAASETEARE) is cleaved from the precursor. Disulfide bonds link cysteine 51/cysteine 65, cysteine 58/cysteine 70, and cysteine 64/cysteine 81.

The protein belongs to the neurotoxin 10 (Hwtx-1) family. 13 (Hntx-13) subfamily. In terms of tissue distribution, expressed by the venom gland.

Its subcellular location is the secreted. Functionally, ion channel inhibitor. The protein is U7-theraphotoxin-Hhn1a 7 of Cyriopagopus hainanus (Chinese bird spider).